We begin with the raw amino-acid sequence, 406 residues long: Formate-dependent phosphoribosylglycinamide formyltransferase (406 aa).

Residues 27 to 28 and glutamate 87 each bind N(1)-(5-phospho-beta-D-ribosyl)glycinamide; that span reads EL. Residues arginine 120, lysine 162, 167-172, 202-205, and glutamate 210 contribute to the ATP site; these read SSGKGQ and EGFI. An ATP-grasp domain is found at 125–320; sequence RLAAETLGLP…EFELHARALL (196 aa). Glutamate 279 and glutamate 291 together coordinate Mg(2+). N(1)-(5-phospho-beta-D-ribosyl)glycinamide is bound by residues aspartate 298, lysine 367, and 374–375; that span reads RR.

The protein belongs to the PurK/PurT family. Homodimer.

It catalyses the reaction N(1)-(5-phospho-beta-D-ribosyl)glycinamide + formate + ATP = N(2)-formyl-N(1)-(5-phospho-beta-D-ribosyl)glycinamide + ADP + phosphate + H(+). The protein operates within purine metabolism; IMP biosynthesis via de novo pathway; N(2)-formyl-N(1)-(5-phospho-D-ribosyl)glycinamide from N(1)-(5-phospho-D-ribosyl)glycinamide (formate route): step 1/1. Its function is as follows. Involved in the de novo purine biosynthesis. Catalyzes the transfer of formate to 5-phospho-ribosyl-glycinamide (GAR), producing 5-phospho-ribosyl-N-formylglycinamide (FGAR). Formate is provided by PurU via hydrolysis of 10-formyl-tetrahydrofolate. This Bordetella bronchiseptica (strain ATCC BAA-588 / NCTC 13252 / RB50) (Alcaligenes bronchisepticus) protein is Formate-dependent phosphoribosylglycinamide formyltransferase.